A 607-amino-acid chain; its full sequence is Homologous recombination OB-fold protein (607 aa).

4 disordered regions span residues 25–49, 84–108, 196–308, and 531–581; these read LRPN…SYPA, ISSS…SGRQ, PWPS…TTVT, and LKPP…DDLD. Composition is skewed to polar residues over residues 27–49 and 92–108; these read PNSS…SYPA and QQRM…SGRQ. Residue serine 30 is modified to Phosphoserine. The residue at position 281 (arginine 281) is an Asymmetric dimethylarginine. Residues 295-308 show a composition bias toward low complexity; sequence SPFSTPRSTSTTVT. The segment covering 570 to 581 has biased composition (acidic residues); it reads PEEELPEADDLD.

As to quaternary structure, interacts with MCM8; this interaction is necessary for MCM8-MCM9 helicase complex recruitment to DNA damage sites. Interacts with RPA1; this interaction associates HROB with the RPA complex.

Its subcellular location is the nucleus. It localises to the chromosome. DNA-binding protein involved in homologous recombination that acts by recruiting the MCM8-MCM9 helicase complex to sites of DNA damage to promote DNA repair synthesis. The protein is Homologous recombination OB-fold protein of Rattus norvegicus (Rat).